Consider the following 343-residue polypeptide: MDIKQALKKLVASIDLSTEEMISVMRIVMTGGATPAQIGGFLVALRMKGETLDEITGAAMVMRELATPVNIDVDYLVDTCGTGGDGANLFNLSTASAFVVAAAGGRVAKHGNRSVSSSTGSADVLEAAGIKLDITAEQVARCVKEIGVGFMFAPSHHSAMKHAIGPRRELGMRTIFNMLGPLTNPANVKRQVIGVFNGELCKPMAEVLGRLGSEHVMVVHAKDGLDEISLATETQVAELKGGEIREYIIKPEDFGMQSKSLIGLSVSNAEDSLLLIRDALGNRRGQYAEKAADIIALNAGAAIYVSGVAGSLSDGVEMARDAIGSSLAGEKIRELAAFTQYLQ.

Residues Gly81, 84–85 (GD), 91–94 (NLST), 109–117 (KHGNRSVSS), and Ser121 each bind 5-phospho-alpha-D-ribose 1-diphosphate. Gly81 contributes to the anthranilate binding site. Ser93 contributes to the Mg(2+) binding site. Asn112 lines the anthranilate pocket. Residue Arg167 coordinates anthranilate. Mg(2+) is bound by residues Asp226 and Glu227.

The protein belongs to the anthranilate phosphoribosyltransferase family. In terms of assembly, homodimer. The cofactor is Mg(2+).

The catalysed reaction is N-(5-phospho-beta-D-ribosyl)anthranilate + diphosphate = 5-phospho-alpha-D-ribose 1-diphosphate + anthranilate. It functions in the pathway amino-acid biosynthesis; L-tryptophan biosynthesis; L-tryptophan from chorismate: step 2/5. Functionally, catalyzes the transfer of the phosphoribosyl group of 5-phosphorylribose-1-pyrophosphate (PRPP) to anthranilate to yield N-(5'-phosphoribosyl)-anthranilate (PRA). The protein is Anthranilate phosphoribosyltransferase of Cellvibrio japonicus (strain Ueda107) (Pseudomonas fluorescens subsp. cellulosa).